The following is a 435-amino-acid chain: Uracil permease (435 aa).

12 helical membrane-spanning segments follow: residues 17–37, 42–62, 67–87, 91–111, 122–142, 161–181, 191–213, 234–254, 311–331, 336–356, 376–396, and 399–419; these read FSWV…TILV, GMSP…YLLI, IPAY…VKAT, GAAM…ALLI, ILPP…LAST, LKHF…AIFL, LIGI…QPVL, VTLG…SEHI, VFSV…GFIG, LISS…FGII, NLII…IQVS, and GFQV…NLIL.

This sequence belongs to the nucleobase:cation symporter-2 (NCS2) (TC 2.A.40) family.

The protein resides in the cell membrane. In terms of biological role, transport of uracil in the cell. This Bacillus subtilis (strain 168) protein is Uracil permease (pyrP).